Here is a 114-residue protein sequence, read N- to C-terminus: UPF0145 protein SSO1976 (114 aa).

Belongs to the UPF0145 family.

The chain is UPF0145 protein SSO1976 from Saccharolobus solfataricus (strain ATCC 35092 / DSM 1617 / JCM 11322 / P2) (Sulfolobus solfataricus).